Reading from the N-terminus, the 529-residue chain is Bifunctional purine biosynthesis protein PurH (529 aa).

In terms of domain architecture, MGS-like spans 1-148 (MQQRRPVRRA…KNHKDVAIVV (148 aa)). The residue at position 287 (lysine 287) is an N6-acetyllysine.

This sequence belongs to the PurH family.

It catalyses the reaction (6R)-10-formyltetrahydrofolate + 5-amino-1-(5-phospho-beta-D-ribosyl)imidazole-4-carboxamide = 5-formamido-1-(5-phospho-D-ribosyl)imidazole-4-carboxamide + (6S)-5,6,7,8-tetrahydrofolate. The enzyme catalyses IMP + H2O = 5-formamido-1-(5-phospho-D-ribosyl)imidazole-4-carboxamide. Its pathway is purine metabolism; IMP biosynthesis via de novo pathway; 5-formamido-1-(5-phospho-D-ribosyl)imidazole-4-carboxamide from 5-amino-1-(5-phospho-D-ribosyl)imidazole-4-carboxamide (10-formyl THF route): step 1/1. It participates in purine metabolism; IMP biosynthesis via de novo pathway; IMP from 5-formamido-1-(5-phospho-D-ribosyl)imidazole-4-carboxamide: step 1/1. The protein is Bifunctional purine biosynthesis protein PurH of Escherichia coli (strain SMS-3-5 / SECEC).